We begin with the raw amino-acid sequence, 4678 residues long: E3 ubiquitin-protein ligase MYCBP2 (4678 aa).

Disordered regions lie at residues 87-127 (DRDQ…RSKS), 172-192 (SKNSVQSGESDSDEEEESKEP), and 609-628 (ASKGEDGESTKSRRQSKPYK). A compositionally biased stretch (basic residues) spans 100 to 124 (SRNKKILNKKKLKRKQKSKSKVKTR). Ser-127, Ser-178, Ser-181, and Ser-183 each carry phosphoserine. 5 RCC1 repeats span residues 600–655 (DGSI…VISK), 699–755 (NGEV…MMCP), 907–957 (KRDK…VLME), 958–1008 (NGDV…VLLM), and 1010–1066 (GQVF…LRID). Residues 898–910 (RSHPAQLKHKRDK) show a composition bias toward basic residues. The segment at 898-928 (RSHPAQLKHKRDKHKDGSGERGEKDASKITT) is disordered. Residues 911–924 (HKDGSGERGEKDAS) are compositionally biased toward basic and acidic residues. Residues 1235-1386 (NRFESHGGGW…GQIPQLLYRL (152 aa)) form a PHR domain 1 region. Ser-1624 is modified (phosphoserine). The interval 1726 to 1884 (NRFTKTSQGR…GQIPQILYYR (159 aa)) is PHR domain 2. Cys-1748 and Cys-1863 are joined by a disulfide. Disordered regions lie at residues 1993–2012 (FNPNQSTDSTTGNQPEQGLS) and 2321–2340 (QQDQAKKPQRIPGSPAVTAA). Positions 1994 to 2012 (NPNQSTDSTTGNQPEQGLS) are enriched in polar residues. The tract at residues 2022–2550 (VIESEHPYKP…NQHLGKSLLV (529 aa)) is RAE1 binding. The stretch at 2341-2443 (SSNTDMTYGG…IDAGLEVKVK (103 aa)) is one Filamin repeat. Position 2683 is a phosphothreonine (Thr-2683). Disordered regions lie at residues 2709–2931 (LGNS…LHSE), 2943–2963 (TNSLTDSTCDDSSEFKSVDEG), 2979–3020 (EQEM…EPAK), and 3066–3085 (APIRSSLNSQQPTEEKETKL). The segment covering 2718-2733 (NISTSSKPASTSGKSE) has biased composition (polar residues). The segment covering 2742-2760 (LKPDGRMSRTTADQKKPRG) has biased composition (basic and acidic residues). Ser-2769 is subject to Phosphoserine. Positions 2775 to 2785 (DAAKLRSDSHS) are enriched in basic and acidic residues. Residues 2786 to 2810 (RSLSPNHNTLQTLKSDGRMPSSSRA) show a composition bias toward polar residues. Phosphoserine is present on residues Ser-2787, Ser-2789, Ser-2833, Ser-2839, Ser-2869, Ser-2871, and Ser-2920. The span at 2828–2843 (PANRSSPSGASSPRSS) shows a compositional bias: low complexity. Residues 2860–2871 (TKLDPPRERSKS) show a composition bias toward basic and acidic residues. Position 2985 is a phosphoserine (Ser-2985). The span at 2988-3001 (ISRKCANRHTRPKK) shows a compositional bias: basic residues. Ser-3090, Ser-3478, and Ser-3505 each carry phosphoserine. The interval 3605 to 3631 (PVEPEEEEDEENKTSKENSEQEKDTRV) is disordered. The span at 3616–3631 (NKTSKENSEQEKDTRV) shows a compositional bias: basic and acidic residues. Residues 3719 to 3897 (SISIQSGFEA…VAQQRNCEAE (179 aa)) enclose the DOC domain. The tract at residues 3915–3934 (SGDAEPTPEQEEKALLSSPE) is disordered. Position 3921 is a phosphothreonine (Thr-3921). 2 positions are modified to phosphoserine: Ser-3931 and Ser-3932. Zn(2+)-binding residues include Cys-4428, Cys-4431, Cys-4446, His-4448, His-4451, Cys-4454, Cys-4475, Cys-4478, Cys-4544, and Cys-4547. An RING-type; atypical zinc finger spans residues 4428–4479 (CMICFTEALSAAPAIQLDCSHIFHLQCCRRVLENRWLGPRITFGFISCPICK). The tandem cysteine domain stretch occupies residues 4539–4676 (YAYYVCYKCR…LGCGVCRNAH (138 aa)). Cys-4558 is a catalytic residue. Zn(2+) is bound by residues Cys-4575, Cys-4578, Cys-4587, His-4590, Cys-4599, Cys-4602, and Cys-4603. Residue Cys-4610 is part of the active site. Positions 4617, 4620, 4638, 4652, 4658, 4669, and 4672 each coordinate Zn(2+).

The protein belongs to the RING-Cys relay (RCR) family. Interacts with MYC. Interacts with TSC2 (tuberin) when TSC2 is in complex with TSC1 (hamartin). Interacts with FBXO45. Interacts with RAE1. Interacts with CPNE1 (via VWFA domain) and CPNE4 (via VWFA domain). Interacts with (sumoylated) RANGAP1; interaction with sumoylated RANGAP1 inhibits E3 ubiquitin-protein ligase activity and promotes MYCBP2 translocation to the nucleus. Interacts with RAN. Interacts with ATP13A2; the interaction inhibits the ubiquitination of TSC2 by MYCBP2. Interacts with USP11. Autoubiquitinated. As to expression, expressed in all tissues examined, expression is exceptionally abundant in brain and thymus. Colocalizes with TSC1 and TSC2 along the neurites and in the growth cones. Highly expressed in peripheral and central neurons. Colocalized with TSC1 in one of the filopodial extensions at the tip of a growth cone.

The protein resides in the nucleus. It localises to the cell projection. Its subcellular location is the axon. It is found in the cytoplasm. The protein localises to the cytoskeleton. The enzyme catalyses [E2 ubiquitin-conjugating enzyme]-S-ubiquitinyl-L-cysteine + [acceptor protein]-L-threonine = [E2 ubiquitin-conjugating enzyme]-L-cysteine + [acceptor protein]-3-O-ubiquitinyl-L-threonine.. It participates in protein modification; protein ubiquitination. Functionally, atypical E3 ubiquitin-protein ligase which specifically mediates ubiquitination of threonine and serine residues on target proteins, instead of ubiquitinating lysine residues. Shows esterification activity towards both threonine and serine, with a preference for threonine, and acts via two essential catalytic cysteine residues that relay ubiquitin to its substrate via thioester intermediates. Interacts with the E2 enzymes UBE2D1, UBE2D3, UBE2E1 and UBE2L3. Plays a key role in neural development, probably by mediating ubiquitination of threonine residues on target proteins. Involved in different processes such as regulation of neurite outgrowth, synaptic growth, synaptogenesis and axon degeneration. Required for the formation of major central nervous system axon tracts. Required for proper axon growth by regulating axon navigation and axon branching: acts by regulating the subcellular location and stability of MAP3K12/DLK. Required for proper localization of retinogeniculate projections but not for eye-specific segregation. Regulates axon guidance in the olfactory system. Involved in Wallerian axon degeneration, an evolutionarily conserved process that drives the loss of damaged axons: acts by promoting destabilization of NMNAT2, probably via ubiquitination of NMNAT2. Catalyzes ubiquitination of threonine and/or serine residues on NMNAT2, consequences of threonine and/or serine ubiquitination are however unknown. Regulates the internalization of TRPV1 in peripheral sensory neurons. Mediates ubiquitination and subsequent proteasomal degradation of TSC2/tuberin. Independently of the E3 ubiquitin-protein ligase activity, also acts as a guanosine exchange factor (GEF) for RAN in neurons of dorsal root ganglia. May function as a facilitator or regulator of transcriptional activation by MYC. Acts in concert with HUWE1 to regulate the circadian clock gene expression by promoting the lithium-induced ubiquination and degradation of NR1D1. This Homo sapiens (Human) protein is E3 ubiquitin-protein ligase MYCBP2.